We begin with the raw amino-acid sequence, 92 residues long: Small ribosomal subunit protein uS19c (92 aa).

The protein belongs to the universal ribosomal protein uS19 family.

The protein resides in the plastid. The protein localises to the chloroplast. Functionally, protein S19 forms a complex with S13 that binds strongly to the 16S ribosomal RNA. This chain is Small ribosomal subunit protein uS19c (rps19), found in Picea abies (Norway spruce).